The sequence spans 625 residues: Probable potassium transport system protein Kup 2 (625 aa).

The next 12 membrane-spanning stretches (helical) occupy residues 10–30, 47–67, 104–124, 140–160, 172–192, 214–234, 250–270, 283–303, 347–367, 369–389, 396–416, and 422–442; these read LAALTLGAMGVVYGDIGTSPL, GVHLIGAVSVIFWGLMMVVTL, VLLLMGVFGAALFYGDSVITP, PAFKSYVLPISVTVLIGLFAV, FGPVIMLWFAVLSVTGVAEII, GWHMFVAVGAIVLAFTGVEAL, WLGLVLPALAINYMGQGALLM, LFPQAWLMPAVVLATLATVIA, WLLLISVLLAVVGFGSSSALA, AYGIAVTMTMLITTALTFFVV, PLPVALAATAVFLALDTLLVV, and FFQGGWFPLVLGLVIFTVMAT.

It belongs to the HAK/KUP transporter (TC 2.A.72) family.

The protein resides in the cell inner membrane. It carries out the reaction K(+)(in) + H(+)(in) = K(+)(out) + H(+)(out). Its function is as follows. Transport of potassium into the cell. Likely operates as a K(+):H(+) symporter. This is Probable potassium transport system protein Kup 2 from Albidiferax ferrireducens (strain ATCC BAA-621 / DSM 15236 / T118) (Rhodoferax ferrireducens).